The chain runs to 431 residues: Adenylosuccinate synthetase (431 aa).

GTP is bound by residues 13-19 (GDEGKGK) and 41-43 (GHT). The Proton acceptor role is filled by aspartate 14. Aspartate 14 and glycine 41 together coordinate Mg(2+). IMP is bound by residues 14 to 17 (DEGK), 39 to 42 (NAGH), threonine 130, arginine 144, glutamine 225, threonine 240, and arginine 304. The active-site Proton donor is histidine 42. A substrate-binding site is contributed by 300–306 (ATTHRPR). Residues arginine 306, 332–334 (KLD), and 414–416 (STG) contribute to the GTP site.

Belongs to the adenylosuccinate synthetase family. In terms of assembly, homodimer. The cofactor is Mg(2+).

The protein resides in the cytoplasm. It carries out the reaction IMP + L-aspartate + GTP = N(6)-(1,2-dicarboxyethyl)-AMP + GDP + phosphate + 2 H(+). It functions in the pathway purine metabolism; AMP biosynthesis via de novo pathway; AMP from IMP: step 1/2. Functionally, plays an important role in the de novo pathway of purine nucleotide biosynthesis. Catalyzes the first committed step in the biosynthesis of AMP from IMP. The polypeptide is Adenylosuccinate synthetase (Nitrosococcus oceani (strain ATCC 19707 / BCRC 17464 / JCM 30415 / NCIMB 11848 / C-107)).